The following is a 250-amino-acid chain: Protein lin-28 homolog B (250 aa).

Disordered stretches follow at residues 1-27 (MAEA…ESPL) and 98-126 (RVTG…KPKG). The segment covering 9-18 (GGEEPGRLPE) has biased composition (basic and acidic residues). Residues 29–102 (HGAGHCKWFN…GLESIRVTGP (74 aa)) form the CSD domain. Over residues 114–125 (PKGKTVQKRKPK) the composition is skewed to basic residues. 2 CCHC-type zinc fingers span residues 127–144 (DRCY…ECSL) and 149–166 (KKCH…NCPH). Residues cysteine 129, cysteine 132, histidine 137, cysteine 142, cysteine 151, cysteine 154, histidine 159, and cysteine 164 each coordinate Zn(2+). The segment at 165-250 (PHKTVSQQPT…GPSVQKRKKT (86 aa)) is disordered. The span at 168 to 177 (TVSQQPTSSQ) shows a compositional bias: polar residues. Residues 200-209 (GYSSPSYSQE) are compositionally biased toward low complexity. A compositionally biased stretch (basic and acidic residues) spans 210-219 (GRSEISERSG).

The protein belongs to the lin-28 family.

Its subcellular location is the nucleus. It is found in the nucleolus. Suppressor of specific microRNA (miRNA) biogenesis. Binds target primary miRNA transcripts and sequester them in the nucleolus, away from the microprocessor complex, hence preventing their processing into mature miRNA. The specific interaction with target pri-miRNAs occurs via an 5'-GGAG-3' motif in the pre-miRNA terminal loop. The polypeptide is Protein lin-28 homolog B (LIN28B) (Gallus gallus (Chicken)).